The sequence spans 346 residues: MSEQKDMYVLGIETSCDETAAAIVKNGKEIISNVVASQIESHKRFGGVVPEIASRHHVEQITLVIEEAFRKAGMTYSDIDAIAVTEGPGLVGALLIGVNAAKALSFAYNIPLVGVHHIAGHIYANRLVEDIVFPALALVVSGGHTELVYMKEHGSFEVIGETLDDAAGEAYDKVARTMGLPYPGGPQIDKLAEKGNDNIPLPRAWLEEGSYNFSFSGLKSAVINTLHNASQKGQEIAPEDLSASFQNSVIDVLVTKTARAAKEYDVKQVLLAGGVAANRGLRAALEKEFAQHEGITLVIPPLALCTDNAAMIAAAGTIAFEKGIRGAYDMNGQPGLELTSYQSLTR.

2 residues coordinate Fe cation: His-117 and His-121. Substrate is bound by residues 139-143 (VVSGG), Asp-172, Gly-185, Asp-189, and Asn-278. Residue Asp-307 participates in Fe cation binding.

Belongs to the KAE1 / TsaD family. In terms of assembly, may form a heterodimer with TsaB. The cofactor is Fe(2+).

It localises to the cytoplasm. It carries out the reaction L-threonylcarbamoyladenylate + adenosine(37) in tRNA = N(6)-L-threonylcarbamoyladenosine(37) in tRNA + AMP + H(+). Functionally, required for the formation of a threonylcarbamoyl group on adenosine at position 37 (t(6)A37) in tRNAs that read codons beginning with adenine. Is involved in the transfer of the threonylcarbamoyl moiety of threonylcarbamoyl-AMP (TC-AMP) to the N6 group of A37, together with TsaE and TsaB; this reaction does not require ATP in vitro. TsaD likely plays a direct catalytic role in this reaction. This is tRNA N6-adenosine threonylcarbamoyltransferase from Bacillus subtilis (strain 168).